Reading from the N-terminus, the 413-residue chain is Tryptophan synthase beta chain (413 aa).

Lys106 is subject to N6-(pyridoxal phosphate)lysine.

This sequence belongs to the TrpB family. Tetramer of two alpha and two beta chains. Pyridoxal 5'-phosphate is required as a cofactor.

The enzyme catalyses (1S,2R)-1-C-(indol-3-yl)glycerol 3-phosphate + L-serine = D-glyceraldehyde 3-phosphate + L-tryptophan + H2O. Its pathway is amino-acid biosynthesis; L-tryptophan biosynthesis; L-tryptophan from chorismate: step 5/5. In terms of biological role, the beta subunit is responsible for the synthesis of L-tryptophan from indole and L-serine. The sequence is that of Tryptophan synthase beta chain from Methylorubrum populi (strain ATCC BAA-705 / NCIMB 13946 / BJ001) (Methylobacterium populi).